A 140-amino-acid chain; its full sequence is MKIINILFCLFLLMLNGCNSNDTNNSQTKSRQKRDLTQKEATQEKPKSKEELLREKLNDNQKTHLDWLKEALGNDGEFNKFLGYDESKIKSALDHIKSELDSCTGDKVENKNTFKQVVQEALKGGIDGFENTASSTCKNS.

Residues 1-17 (MKIINILFCLFLLMLNG) form the signal peptide. Cys-18 is lipidated: N-palmitoyl cysteine. Cys-18 carries the S-diacylglycerol cysteine lipid modification. Residues 22 to 53 (DTNNSQTKSRQKRDLTQKEATQEKPKSKEELL) form a disordered region. A compositionally biased stretch (basic and acidic residues) spans 33–53 (KRDLTQKEATQEKPKSKEELL).

Belongs to the Multicopy lipoprotein (Mlp) family.

It localises to the cell outer membrane. An outer membrane protein that may participate in pathogenesis. Some human Lyme disease patients have antibodies against this protein. The Mlp proteins probably undergo intragenic recombination, generating new alleles. This Borreliella burgdorferi (strain ATCC 35210 / DSM 4680 / CIP 102532 / B31) (Borrelia burgdorferi) protein is Lipoprotein MlpD.